Consider the following 507-residue polypeptide: Arylsulfatase A (507 aa).

Residues 1–18 (MGAPRSLLLALAAGLAVA) form the signal peptide. D29, D30, and C69 together coordinate Ca(2+). The active-site Nucleophile is C69. C69 carries the 3-oxoalanine (Cys) modification. Residue K123 participates in substrate binding. H125 is an active-site residue. S150 serves as a coordination point for substrate. Cystine bridges form between C156-C172 and C161-C168. The N-linked (GlcNAc...) asparagine glycan is linked to N158. Residue N184 is glycosylated (N-linked (GlcNAc...) asparagine). Residue H229 participates in substrate binding. Ca(2+) contacts are provided by D281 and N282. Disulfide bonds link C300-C414, C488-C500, C489-C502, and C493-C499. K302 contacts substrate. N350 is a glycosylation site (N-linked (GlcNAc...) asparagine).

This sequence belongs to the sulfatase family. Homodimer at neutral pH and homooctamer at acidic pH. Exists both as a single chain of 58 kDa (component A) or as a chain of 50 kDa (component B) linked by disulfide bond(s) to a 7 kDa chain (component C). Interacts with SUMF1. Requires Ca(2+) as cofactor. The conversion to 3-oxoalanine (also known as C-formylglycine, FGly), of a serine or cysteine residue in prokaryotes and of a cysteine residue in eukaryotes, is critical for catalytic activity. This post-translational modification is severely defective in multiple sulfatase deficiency (MSD).

The protein localises to the endoplasmic reticulum. It is found in the lysosome. It catalyses the reaction an N-acyl-1-beta-D-(3-O-sulfo)-galactosyl-sphing-4-enine + H2O = a beta-D-galactosyl-(1&lt;-&gt;1')-N-acylsphing-4-enine + sulfate + H(+). Inhibited by phosphate. The phosphate forms a covalent bond with the active site 3-oxoalanine. Its function is as follows. Hydrolyzes cerebroside sulfate. The polypeptide is Arylsulfatase A (ARSA) (Homo sapiens (Human)).